We begin with the raw amino-acid sequence, 403 residues long: Shaggy-related protein kinase GSK4 (403 aa).

The Protein kinase domain occupies 71–355 (YMAERVVGTG…ALEACAHSFF (285 aa)). ATP is bound by residues 77–85 (VGTGSFGVV) and Lys100. The active-site Proton acceptor is the Asp196.

The protein belongs to the protein kinase superfamily. CMGC Ser/Thr protein kinase family. GSK-3 subfamily. As to quaternary structure, interacts with LIC.

The catalysed reaction is L-seryl-[protein] + ATP = O-phospho-L-seryl-[protein] + ADP + H(+). It carries out the reaction L-threonyl-[protein] + ATP = O-phospho-L-threonyl-[protein] + ADP + H(+). Probable serine-threonine kinase that may regulate brassinosteroid signaling. This chain is Shaggy-related protein kinase GSK4, found in Oryza sativa subsp. japonica (Rice).